A 361-amino-acid polypeptide reads, in one-letter code: Spermidine/putrescine import ATP-binding protein PotA (361 aa).

Positions 7–241 (IEVRNVSKRY…PQHRFVAQFI (235 aa)) constitute an ABC transporter domain. 43–50 (GPSGCGKT) contacts ATP.

Belongs to the ABC transporter superfamily. Spermidine/putrescine importer (TC 3.A.1.11.1) family. As to quaternary structure, the complex is composed of two ATP-binding proteins (PotA), two transmembrane proteins (PotB and PotC) and a solute-binding protein (PotD).

Its subcellular location is the cell inner membrane. The catalysed reaction is ATP + H2O + polyamine-[polyamine-binding protein]Side 1 = ADP + phosphate + polyamineSide 2 + [polyamine-binding protein]Side 1.. Its function is as follows. Part of the ABC transporter complex PotABCD involved in spermidine/putrescine import. Responsible for energy coupling to the transport system. The chain is Spermidine/putrescine import ATP-binding protein PotA from Pseudomonas fluorescens (strain Pf0-1).